A 177-amino-acid chain; its full sequence is Large ribosomal subunit protein uL6 (177 aa).

This sequence belongs to the universal ribosomal protein uL6 family. As to quaternary structure, part of the 50S ribosomal subunit.

In terms of biological role, this protein binds to the 23S rRNA, and is important in its secondary structure. It is located near the subunit interface in the base of the L7/L12 stalk, and near the tRNA binding site of the peptidyltransferase center. The protein is Large ribosomal subunit protein uL6 of Pseudomonas putida (strain ATCC 700007 / DSM 6899 / JCM 31910 / BCRC 17059 / LMG 24140 / F1).